The primary structure comprises 597 residues: Proteasome-associated ATPase (597 aa).

The span at Met-1–Glu-12 shows a compositional bias: basic and acidic residues. Positions Met-1–Ala-22 are disordered. Positions Asp-21–Pro-97 form a coiled coil. Gly-284–Leu-289 serves as a coordination point for ATP. Positions Tyr-596 to Leu-597 are docks into pockets in the proteasome alpha-ring.

Belongs to the AAA ATPase family. As to quaternary structure, homohexamer. Assembles into a hexameric ring structure that caps the 20S proteasome core. Strongly interacts with the prokaryotic ubiquitin-like protein Pup through a hydrophobic interface; the interacting region of ARC lies in its N-terminal coiled-coil domain. There is one Pup binding site per ARC hexamer ring. Upon ATP-binding, the C-terminus of ARC interacts with the alpha-rings of the proteasome core, possibly by binding to the intersubunit pockets.

Its pathway is protein degradation; proteasomal Pup-dependent pathway. Its function is as follows. ATPase which is responsible for recognizing, binding, unfolding and translocation of pupylated proteins into the bacterial 20S proteasome core particle. May be essential for opening the gate of the 20S proteasome via an interaction with its C-terminus, thereby allowing substrate entry and access to the site of proteolysis. Thus, the C-termini of the proteasomal ATPase may function like a 'key in a lock' to induce gate opening and therefore regulate proteolysis. This chain is Proteasome-associated ATPase, found in Saccharopolyspora erythraea (strain ATCC 11635 / DSM 40517 / JCM 4748 / NBRC 13426 / NCIMB 8594 / NRRL 2338).